Here is a 118-residue protein sequence, read N- to C-terminus: DNA-binding protein Msm_0708 (118 aa).

The disordered stretch occupies residues 16–39; that stretch reads EARQAAAQGQMQQQAQQQMQQQEA. Positions 18 to 39 are enriched in low complexity; that stretch reads RQAAAQGQMQQQAQQQMQQQEA.

Belongs to the PDCD5 family.

This chain is DNA-binding protein Msm_0708, found in Methanobrevibacter smithii (strain ATCC 35061 / DSM 861 / OCM 144 / PS).